We begin with the raw amino-acid sequence, 1313 residues long: Angiotensin-converting enzyme (1313 aa).

An N-terminal signal peptide occupies residues 1–35 (MGAASGQRGRWPLSPPLLMLSLLLLLLLPPSPAPA). Residues 36-1265 (LDPGLQPGNF…LEPQQARVGQ (1230 aa)) lie on the Extracellular side of the membrane. N-linked (GlcNAc...) asparagine glycans are attached at residues asparagine 44, asparagine 60, asparagine 80, asparagine 117, asparagine 152, and asparagine 166. Peptidase M2 domains lie at 46-630 (SADE…LGWP) and 649-1228 (ETDE…LGWP). Residues cysteine 163 and cysteine 171 are joined by a disulfide bond. A chloride-binding site is contributed by tyrosine 237. Residue asparagine 324 is glycosylated (N-linked (GlcNAc...) asparagine). Cysteine 365 and cysteine 383 are disulfide-bonded. A Zn(2+)-binding site is contributed by histidine 396. Catalysis depends on glutamate 397, which acts as the Proton acceptor 1. Zn(2+)-binding residues include histidine 400 and glutamate 424. N-linked (GlcNAc...) asparagine glycosylation is present at asparagine 515. Residue histidine 526 is the Proton donor 1 of the active site. Residue arginine 535 participates in chloride binding. Cysteine 551 and cysteine 563 are oxidised to a cystine. Residues asparagine 683, asparagine 701, asparagine 720, and asparagine 766 are each glycosylated (N-linked (GlcNAc...) asparagine). A disulfide bridge links cysteine 763 with cysteine 769. Positions 797 and 835 each coordinate chloride. Asparagine 948 carries an N-linked (GlcNAc...) asparagine glycan. The cysteines at positions 963 and 981 are disulfide-linked. Residue histidine 994 participates in Zn(2+) binding. Glutamate 995 acts as the Proton acceptor 2 in catalysis. Zn(2+) is bound by residues histidine 998 and glutamate 1022. The chloride site is built by tryptophan 1096 and arginine 1100. Histidine 1124 functions as the Proton donor 2 in the catalytic mechanism. Arginine 1133 serves as a coordination point for chloride. Cysteine 1149 and cysteine 1161 are oxidised to a cystine. N-linked (GlcNAc...) asparagine glycosylation is present at asparagine 1197. Positions 1221–1262 (HGETLGWPEYTWTPNTARAEGSLPESSRVNFLGMYLEPQQAR) are juxtamembrane stalk. Residues 1266-1282 (WVLLFLGVALLVATVGL) form a helical membrane-spanning segment. At 1283–1313 (AHRLYNIHNHHSLRRPHRGPQFGSEVELRHS) the chain is on the cytoplasmic side. Serine 1306 bears the Phosphoserine mark.

It belongs to the peptidase M2 family. As to quaternary structure, monomer and homodimer; homodimerizes following binding to an inhibitor. Interacts with calmodulin (CALM1, CALM2 or CALM3); interaction takes place in the cytoplasmic region and regulates phosphorylation and proteolytic cleavage. Requires Zn(2+) as cofactor. The cofactor is chloride. In terms of processing, produced following proteolytic cleavage by secretase enzymes that cleave the transmembrane form in the juxtamembrane stalk region upstream of the transmembrane region. Cleavage can take place at different sites of the juxtamembrane stalk region. Post-translationally, phosphorylated by CK2 on Ser-1306; which allows membrane retention. Phosphorylated on tyrosine residues on its extracellular part, promoting cleavage by secretase enzymes and formation of the soluble form (Angiotensin-converting enzyme, soluble form). As to expression, expressed in brain, kidney, lung, skeletal muscle and heart. In terms of tissue distribution, testis-specific isoform is expressed in spermatocytes, adult testis.

The protein resides in the cell membrane. It is found in the cytoplasm. It localises to the secreted. It carries out the reaction Release of a C-terminal dipeptide, oligopeptide-|-Xaa-Yaa, when Xaa is not Pro, and Yaa is neither Asp nor Glu. Thus, conversion of angiotensin I to angiotensin II, with increase in vasoconstrictor activity, but no action on angiotensin II.. The catalysed reaction is angiotensin I + H2O = L-histidyl-L-leucine + angiotensin II. The enzyme catalyses bradykinin + H2O = L-Phe-L-Arg + bradykinin(1-7). It catalyses the reaction substance P + H2O = substance P(1-9) + L-Leu-L-Met-NH2. It carries out the reaction substance P + H2O = substance P(1-8) + Gly-L-Leu-L-Met-NH2. The catalysed reaction is substance P + H2O = L-Phe-L-Phe-Gly-L-Leu-L-Met-NH2 + substance P(1-6). The enzyme catalyses neurotensin + H2O = neurotensin(1-11) + L-isoleucyl-L-leucine. It catalyses the reaction goralatide + H2O = N-acetyl-L-seryl-L-aspartate + L-lysyl-L-proline. It carries out the reaction Met-enkephalin + H2O = L-phenylalanyl-L-methionine + L-tyrosylglycylglycine. The catalysed reaction is Leu-enkephalin + H2O = L-tyrosylglycylglycine + L-phenylalanyl-L-leucine. The enzyme catalyses Met-enkephalin-Arg-Phe + H2O = L-arginyl-L-phenylalanine + Met-enkephalin. With respect to regulation, the dipeptidyl carboxypeptidase activity is strongly activated by chloride. The dipeptidyl carboxypeptidase activity is specifically inhibited by lisinopril, captopril and enalaprilat. Its activity is regulated as follows. Strongly inhibited by lisinopril and captopril. In terms of biological role, dipeptidyl carboxypeptidase that removes dipeptides from the C-terminus of a variety of circulating hormones, such as angiotensin I, bradykinin or enkephalins, thereby playing a key role in the regulation of blood pressure, electrolyte homeostasis or synaptic plasticity. Composed of two similar catalytic domains, each possessing a functional active site, with different selectivity for substrates. Plays a major role in the angiotensin-renin system that regulates blood pressure and sodium retention by the kidney by converting angiotensin I to angiotensin II, resulting in an increase of the vasoconstrictor activity of angiotensin. Also able to inactivate bradykinin, a potent vasodilator, and therefore enhance the blood pressure response. Acts as a regulator of synaptic transmission by mediating cleavage of neuropeptide hormones, such as substance P, neurotensin or enkephalins. Catalyzes degradation of different enkephalin neuropeptides (Met-enkephalin, Leu-enkephalin, Met-enkephalin-Arg-Phe and possibly Met-enkephalin-Arg-Gly-Leu). Acts as a regulator of synaptic plasticity in the nucleus accumbens of the brain by mediating cleavage of Met-enkephalin-Arg-Phe, a strong ligand of Mu-type opioid receptor OPRM1, into Met-enkephalin. Met-enkephalin-Arg-Phe cleavage by ACE decreases activation of OPRM1, leading to long-term synaptic potentiation of glutamate release. Also acts as a regulator of hematopoietic stem cell differentiation by mediating degradation of hemoregulatory peptide N-acetyl-SDKP (AcSDKP). Acts as a regulator of cannabinoid signaling pathway by mediating degradation of hemopressin, an antagonist peptide of the cannabinoid receptor CNR1. Involved in amyloid-beta metabolism by catalyzing degradation of Amyloid-beta protein 40 and Amyloid-beta protein 42 peptides, thereby preventing plaque formation. Catalyzes cleavage of cholecystokinin (maturation of Cholecystokinin-8 and Cholecystokinin-5) and Gonadoliberin-1 (both maturation and degradation) hormones. Degradation of hemoregulatory peptide N-acetyl-SDKP (AcSDKP) and amyloid-beta proteins is mediated by the N-terminal catalytic domain, while angiotensin I and cholecystokinin cleavage is mediated by the C-terminal catalytic region. Soluble form that is released in blood plasma and other body fluids following proteolytic cleavage in the juxtamembrane stalk region. Functionally, isoform produced by alternative promoter usage that is specifically expressed in spermatocytes and adult testis, and which is required for male fertility. In contrast to somatic isoforms, only contains one catalytic domain. Acts as a dipeptidyl carboxypeptidase that removes dipeptides from the C-terminus of substrates. The identity of substrates that are needed for male fertility is unknown. May also have a glycosidase activity which releases GPI-anchored proteins from the membrane by cleaving the mannose linkage in the GPI moiety. The GPIase activity was reported to be essential for the egg-binding ability of the sperm. This activity is however unclear and has been challenged by other groups, suggesting that it may be indirect. This Rattus norvegicus (Rat) protein is Angiotensin-converting enzyme.